The primary structure comprises 300 residues: D-alanine--D-alanine ligase (300 aa).

The region spanning 99-293 (KKILKYANIN…FAELLNSIVK (195 aa)) is the ATP-grasp domain. Position 126–181 (126–181 (IEKIGYPVFVKPNSGGSSVATNLVKNKEGIKEAVELALKYDKEVMIENYTKGEEIT)) interacts with ATP. Mg(2+) is bound by residues Asp248, Glu260, and Asn262.

This sequence belongs to the D-alanine--D-alanine ligase family. The cofactor is Mg(2+). Mn(2+) serves as cofactor.

Its subcellular location is the cytoplasm. The enzyme catalyses 2 D-alanine + ATP = D-alanyl-D-alanine + ADP + phosphate + H(+). The protein operates within cell wall biogenesis; peptidoglycan biosynthesis. Its function is as follows. Cell wall formation. This Clostridium botulinum (strain Loch Maree / Type A3) protein is D-alanine--D-alanine ligase.